Consider the following 241-residue polypeptide: UPF0280 protein MK0206 (241 aa).

This sequence belongs to the UPF0280 family.

This Methanopyrus kandleri (strain AV19 / DSM 6324 / JCM 9639 / NBRC 100938) protein is UPF0280 protein MK0206.